The following is a 176-amino-acid chain: Ribosome maturation factor RimM (176 aa).

One can recognise a PRC barrel domain in the interval 103–176 (QNDEYYFYEI…KIVVKELEWI (74 aa)).

The protein belongs to the RimM family. As to quaternary structure, binds ribosomal protein uS19.

It is found in the cytoplasm. Its function is as follows. An accessory protein needed during the final step in the assembly of 30S ribosomal subunit, possibly for assembly of the head region. Essential for efficient processing of 16S rRNA. May be needed both before and after RbfA during the maturation of 16S rRNA. It has affinity for free ribosomal 30S subunits but not for 70S ribosomes. This Thermotoga neapolitana (strain ATCC 49049 / DSM 4359 / NBRC 107923 / NS-E) protein is Ribosome maturation factor RimM.